Reading from the N-terminus, the 297-residue chain is UBX domain-containing protein 1 (297 aa).

An N-acetylalanine modification is found at A2. The region spanning 2 to 42 (AELTALESLIEMGFPRGRAEKALALTGNQGIEAAMDWLMEH) is the UBA domain. The segment at 38–212 (WLMEHEDDPD…QEPPTKREYD (175 aa)) is disordered. Residues 42–52 (HEDDPDVDEPL) are compositionally biased toward acidic residues. Residues 43–297 (EDDPDVDEPL…VLIVAKKCPS (255 aa)) are interaction with BRCA1. 2 stretches are compositionally biased toward basic and acidic residues: residues 86 to 122 (LTEE…EREK) and 137 to 177 (KLQE…ERAQ). Residues 86-172 (LTEEERQEQT…RVREKIERDK (87 aa)) adopt a coiled-coil conformation. S199 is subject to Phosphoserine. S200 is subject to Phosphoserine; by MAPK12. A phosphothreonine mark is found at T207 and T229. Residues 209 to 291 (REYDQCRIQV…GLVPSAVLIV (83 aa)) enclose the UBX domain. Residue S270 is modified to Phosphoserine.

In terms of assembly, component of a complex required to couple retrotranslocation, ubiquitination and deglycosylation composed of NGLY1, SAKS1, AMFR, VCP and RAD23B. Interacts with HOMER2. Interacts directly with VCP. Interacts with BRCA1 and BARD1; interaction takes place when BRCA1 is not autoubiquitinated bur is strongly enhanced in the presence of autoubiquitinated BRCA1.

The protein resides in the cytoplasm. Ubiquitin-binding protein that interacts with the BRCA1-BARD1 heterodimer, and regulates its activity. Specifically binds 'Lys-6'-linked polyubiquitin chains. Interaction with autoubiquitinated BRCA1, leads to inhibit the E3 ubiquitin-protein ligase activity of the BRCA1-BARD1 heterodimer. Component of a complex required to couple deglycosylation and proteasome-mediated degradation of misfolded proteins in the endoplasmic reticulum that are retrotranslocated in the cytosol. This is UBX domain-containing protein 1 (Ubxn1) from Rattus norvegicus (Rat).